The sequence spans 61 residues: LECHNQQSSQAPTTKTCSGETNCYKKWWSDHRGTIIERGCGCPKVKPGVNLNCCRTDRCNN.

4 cysteine pairs are disulfide-bonded: Cys-3-Cys-23, Cys-17-Cys-40, Cys-42-Cys-53, and Cys-54-Cys-59.

This sequence belongs to the three-finger toxin family. Short-chain subfamily. Type I alpha-neurotoxin sub-subfamily. As to expression, expressed by the venom gland.

The protein resides in the secreted. Its function is as follows. Produces peripheral paralysis by blocking neuromuscular transmission at the postsynaptic site. Binds to the nicotinic acetylcholine receptor. The sequence is that of Cobrotoxin-c from Naja kaouthia (Monocled cobra).